The chain runs to 179 residues: ATP synthase subunit delta (179 aa).

It belongs to the ATPase delta chain family. As to quaternary structure, F-type ATPases have 2 components, F(1) - the catalytic core - and F(0) - the membrane proton channel. F(1) has five subunits: alpha(3), beta(3), gamma(1), delta(1), epsilon(1). F(0) has three main subunits: a(1), b(2) and c(10-14). The alpha and beta chains form an alternating ring which encloses part of the gamma chain. F(1) is attached to F(0) by a central stalk formed by the gamma and epsilon chains, while a peripheral stalk is formed by the delta and b chains.

The protein resides in the cell inner membrane. Its function is as follows. F(1)F(0) ATP synthase produces ATP from ADP in the presence of a proton or sodium gradient. F-type ATPases consist of two structural domains, F(1) containing the extramembraneous catalytic core and F(0) containing the membrane proton channel, linked together by a central stalk and a peripheral stalk. During catalysis, ATP synthesis in the catalytic domain of F(1) is coupled via a rotary mechanism of the central stalk subunits to proton translocation. In terms of biological role, this protein is part of the stalk that links CF(0) to CF(1). It either transmits conformational changes from CF(0) to CF(1) or is implicated in proton conduction. In Acidithiobacillus ferrooxidans (strain ATCC 23270 / DSM 14882 / CIP 104768 / NCIMB 8455) (Ferrobacillus ferrooxidans (strain ATCC 23270)), this protein is ATP synthase subunit delta.